A 346-amino-acid chain; its full sequence is Small ribosomal subunit biogenesis GTPase RsgA 1 (346 aa).

One can recognise a CP-type G domain in the interval alanine 93–phenylalanine 248. Residues threonine 138 to aspartate 141 and glycine 190 to serine 198 each bind GTP. Zn(2+)-binding residues include cysteine 271, cysteine 276, histidine 278, and cysteine 284.

The protein belongs to the TRAFAC class YlqF/YawG GTPase family. RsgA subfamily. As to quaternary structure, monomer. Associates with 30S ribosomal subunit, binds 16S rRNA. Zn(2+) is required as a cofactor.

Its subcellular location is the cytoplasm. Its function is as follows. One of several proteins that assist in the late maturation steps of the functional core of the 30S ribosomal subunit. Helps release RbfA from mature subunits. May play a role in the assembly of ribosomal proteins into the subunit. Circularly permuted GTPase that catalyzes slow GTP hydrolysis, GTPase activity is stimulated by the 30S ribosomal subunit. The chain is Small ribosomal subunit biogenesis GTPase RsgA 1 from Listeria monocytogenes serovar 1/2a (strain ATCC BAA-679 / EGD-e).